The following is a 434-amino-acid chain: 3-ketoacyl-CoA thiolase A, peroxisomal (434 aa).

Residues 1-36 (MSESVGRTSAMHRLQVVLGHLAGRPESSSALQAAPC) constitute a peroxisome transit peptide. Positions 11–36 (MHRLQVVLGHLAGRPESSSALQAAPC) are PTS2-type peroxisomal targeting signal. Catalysis depends on Cys133, which acts as the Acyl-thioester intermediate. Residues Lys183 and Lys244 each carry the N6-acetyllysine modification. Catalysis depends on proton acceptor residues His387 and Cys418.

This sequence belongs to the thiolase-like superfamily. Thiolase family. Homodimer. Interacts (via PTS2-type peroxisomal targeting signal region) with PEX7; leading to its translocation into peroxisomes.

It localises to the peroxisome. The enzyme catalyses an acyl-CoA + acetyl-CoA = a 3-oxoacyl-CoA + CoA. The catalysed reaction is 2 acetyl-CoA = acetoacetyl-CoA + CoA. It carries out the reaction tetradecanoyl-CoA + acetyl-CoA = 3-oxohexadecanoyl-CoA + CoA. It catalyses the reaction hexanoyl-CoA + acetyl-CoA = 3-oxooctanoyl-CoA + CoA. The enzyme catalyses 3-oxohexadecanedioyl-CoA + CoA = tetradecanedioyl-CoA + acetyl-CoA. The catalysed reaction is 3-oxo-(6Z,9Z,12Z,15Z,18Z,21Z)-tetracosahexaenoyl-CoA + CoA = (4Z,7Z,10Z,13Z,16Z,19Z)-docosahexaenoyl-CoA + acetyl-CoA. Its pathway is lipid metabolism; peroxisomal fatty acid beta-oxidation. Its function is as follows. Responsible for the thiolytic cleavage of straight chain 3-keto fatty acyl-CoAs (3-oxoacyl-CoAs). Plays an important role in fatty acid peroxisomal beta-oxidation. Catalyzes the cleavage of short, medium, long, and very long straight chain 3-oxoacyl-CoAs. Medium chain straight 3-oxoacyl-CoAs are preferred substrates. This chain is 3-ketoacyl-CoA thiolase A, peroxisomal, found in Rattus norvegicus (Rat).